A 366-amino-acid polypeptide reads, in one-letter code: Methylthioribose-1-phosphate isomerase (366 aa).

Asp260 acts as the Proton donor in catalysis.

This sequence belongs to the eIF-2B alpha/beta/delta subunits family. MtnA subfamily.

The protein resides in the cytoplasm. Its subcellular location is the nucleus. The enzyme catalyses 5-(methylsulfanyl)-alpha-D-ribose 1-phosphate = 5-(methylsulfanyl)-D-ribulose 1-phosphate. It participates in amino-acid biosynthesis; L-methionine biosynthesis via salvage pathway; L-methionine from S-methyl-5-thio-alpha-D-ribose 1-phosphate: step 1/6. In terms of biological role, catalyzes the interconversion of methylthioribose-1-phosphate (MTR-1-P) into methylthioribulose-1-phosphate (MTRu-1-P). The chain is Methylthioribose-1-phosphate isomerase from Caenorhabditis briggsae.